We begin with the raw amino-acid sequence, 633 residues long: DNA mismatch repair protein MutL (633 aa).

Belongs to the DNA mismatch repair MutL/HexB family.

Functionally, this protein is involved in the repair of mismatches in DNA. It is required for dam-dependent methyl-directed DNA mismatch repair. May act as a 'molecular matchmaker', a protein that promotes the formation of a stable complex between two or more DNA-binding proteins in an ATP-dependent manner without itself being part of a final effector complex. This chain is DNA mismatch repair protein MutL, found in Bacillus pumilus (strain SAFR-032).